Reading from the N-terminus, the 150-residue chain is FCS-Like Zinc finger 15 (150 aa).

Residues 12–28 (NNNNNNNNNNNNNNNKN) are compositionally biased toward low complexity. The disordered stretch occupies residues 12 to 31 (NNNNNNNNNNNNNNNKNPLS). The segment at 67-111 (GFLEHCFLCRRKLLPAKDIYMYKGDRAFCSVECRSKQMIMDEEES) adopts an FLZ-type zinc-finger fold. Residues 129-150 (SPATAPSRYRRDPRNQAGGFAY) are disordered.

This sequence belongs to the FLZ family. In terms of assembly, interacts with KIN10 and KIN11 via its FLZ-type zinc finger domain. Interacts with KINB1 and KINB3 via its N-terminal part. Forms homodimer and heterodimer with FLZ1, FLZ2 and FLZ7 in vitro.

Its subcellular location is the cytoplasm. The protein resides in the P-body. Functionally, may act as an adapter to facilitate the interaction of SnRK1 complex with effector proteins, conferring tissue- and stimulus-type specific differences in the SnRK1 regulation pathway. The chain is FCS-Like Zinc finger 15 from Arabidopsis thaliana (Mouse-ear cress).